The chain runs to 177 residues: ATP synthase subunit delta (177 aa).

Belongs to the ATPase delta chain family. As to quaternary structure, F-type ATPases have 2 components, F(1) - the catalytic core - and F(0) - the membrane proton channel. F(1) has five subunits: alpha(3), beta(3), gamma(1), delta(1), epsilon(1). F(0) has three main subunits: a(1), b(2) and c(10-14). The alpha and beta chains form an alternating ring which encloses part of the gamma chain. F(1) is attached to F(0) by a central stalk formed by the gamma and epsilon chains, while a peripheral stalk is formed by the delta and b chains.

The protein resides in the cell inner membrane. Functionally, f(1)F(0) ATP synthase produces ATP from ADP in the presence of a proton or sodium gradient. F-type ATPases consist of two structural domains, F(1) containing the extramembraneous catalytic core and F(0) containing the membrane proton channel, linked together by a central stalk and a peripheral stalk. During catalysis, ATP synthesis in the catalytic domain of F(1) is coupled via a rotary mechanism of the central stalk subunits to proton translocation. Its function is as follows. This protein is part of the stalk that links CF(0) to CF(1). It either transmits conformational changes from CF(0) to CF(1) or is implicated in proton conduction. The protein is ATP synthase subunit delta of Salmonella agona (strain SL483).